The primary structure comprises 417 residues: Calreticulin (417 aa).

The first 17 residues, 1-17 (MLLSVPLLLGLLGLAAA), serve as a signal peptide directing secretion. An N-domain region spans residues 18 to 197 (EPAVYFKEQF…NSQVESGSLE (180 aa)). Gln-26 is a Ca(2+) binding site. N6-acetyllysine is present on Lys-48. Ca(2+) contacts are provided by Lys-62 and Lys-64. The cysteines at positions 105 and 137 are disulfide-linked. 4 residues coordinate an alpha-D-glucoside: Tyr-109, Lys-111, Tyr-128, and Asp-135. Lys-159 is subject to N6-acetyllysine. Residues 191 to 202 (VESGSLEDDWDF) form a 1-1 repeat. The 4 X approximate repeats stretch occupies residues 191–255 (VESGSLEDDW…DAKKPEDWDE (65 aa)). Positions 193-278 (SGSLEDDWDF…PEYKGEWKPR (86 aa)) are disordered. A P-domain region spans residues 198 to 308 (DDWDFLPPKK…YSPDPSIYAY (111 aa)). Over residues 207 to 251 (KIKDPDASKPEDWDERAKIDDPTDSKPEDWDKPEHIPDPDAKKPE) the composition is skewed to basic and acidic residues. N6-acetyllysine is present on Lys-209. Repeat copies occupy residues 210 to 221 (DPDASKPEDWDE), 227 to 238 (DPTDSKPEDWDK), 244 to 255 (DPDAKKPEDWDE), 259 to 269 (GEWEPPVIQNP), 273 to 283 (GEWKPRQIDNP), and 287 to 297 (GTWIHPEIDNP). Positions 237-270 (DKPEHIPDPDAKKPEDWDEEMDGEWEPPVIQNPE) are interaction with PPIB. The span at 252–261 (DWDEEMDGEW) shows a compositional bias: acidic residues. The 3 X approximate repeats stretch occupies residues 259 to 297 (GEWEPPVIQNPEYKGEWKPRQIDNPDYKGTWIHPEIDNP). The tract at residues 309–417 (DNFGVLGLDL…DVPGQAKDEL (109 aa)) is C-domain. Position 317 (Asp-317) interacts with an alpha-D-glucoside. Asp-328 is a Ca(2+) binding site. The segment at 350 to 417 (TKAAEKQMKD…DVPGQAKDEL (68 aa)) is disordered. Residues 352–379 (AAEKQMKDKQDEEQRLKEEEEDKKRKEE) show a composition bias toward basic and acidic residues. Positions 380 to 409 (EEAEDKEDDEDKDEDEEDEEDKEEDEEEDV) are enriched in acidic residues. The short motif at 414–417 (KDEL) is the Prevents secretion from ER element.

The protein belongs to the calreticulin family. As to quaternary structure, monomer. Component of an EIF2 complex at least composed of CELF1/CUGBP1, CALR, CALR3, EIF2S1, EIF2S2, HSP90B1 and HSPA5. Interacts with PDIA3/ERp57 and SPACA9. Interacts with TRIM21. Interacts with NR3C1. Interacts with PPIB. Interacts (via P-domain) with PDIA5. Interacts with GABARAP. Interacts with CLCC1.

It is found in the endoplasmic reticulum lumen. The protein resides in the cytoplasm. It localises to the cytosol. The protein localises to the secreted. Its subcellular location is the extracellular space. It is found in the extracellular matrix. The protein resides in the cell surface. It localises to the sarcoplasmic reticulum lumen. The protein localises to the cytoplasmic vesicle. Its subcellular location is the secretory vesicle. It is found in the cortical granule. The protein resides in the cytoplasmic granule. In terms of biological role, calcium-binding chaperone that promotes folding, oligomeric assembly and quality control in the endoplasmic reticulum (ER) via the calreticulin/calnexin cycle. This lectin interacts transiently with almost all of the monoglucosylated glycoproteins that are synthesized in the ER. Interacts with the DNA-binding domain of NR3C1 and mediates its nuclear export. Involved in maternal gene expression regulation. May participate in oocyte maturation via the regulation of calcium homeostasis. This is Calreticulin (CALR) from Chlorocebus aethiops (Green monkey).